We begin with the raw amino-acid sequence, 330 residues long: Glucan endo-1,3-beta-glucosidase GIII (330 aa).

The first 25 residues, Met1–Ser25, serve as a signal peptide directing secretion. Glu117 (proton donor) is an active-site residue. Glu255 functions as the Nucleophile in the catalytic mechanism.

This sequence belongs to the glycosyl hydrolase 17 family.

It catalyses the reaction Hydrolysis of (1-&gt;3)-beta-D-glucosidic linkages in (1-&gt;3)-beta-D-glucans.. May provide a degree of protection against microbial invasion of germinated barley grain through its ability to degrade fungal cell wall polysaccharides. This Hordeum vulgare (Barley) protein is Glucan endo-1,3-beta-glucosidase GIII.